We begin with the raw amino-acid sequence, 320 residues long: Homoserine kinase (320 aa).

100-110 contributes to the ATP binding site; sequence PLSSGMGSSAA.

The protein belongs to the GHMP kinase family. Homoserine kinase subfamily.

It localises to the cytoplasm. It catalyses the reaction L-homoserine + ATP = O-phospho-L-homoserine + ADP + H(+). Its pathway is amino-acid biosynthesis; L-threonine biosynthesis; L-threonine from L-aspartate: step 4/5. Functionally, catalyzes the ATP-dependent phosphorylation of L-homoserine to L-homoserine phosphate. This Chlorobium phaeobacteroides (strain BS1) protein is Homoserine kinase.